We begin with the raw amino-acid sequence, 163 residues long: Putative pre-16S rRNA nuclease (163 aa).

The protein belongs to the YqgF nuclease family.

The protein resides in the cytoplasm. Its function is as follows. Could be a nuclease involved in processing of the 5'-end of pre-16S rRNA. This chain is Putative pre-16S rRNA nuclease, found in Zymomonas mobilis subsp. mobilis (strain ATCC 31821 / ZM4 / CP4).